Consider the following 352-residue polypeptide: Phosphoribosylformylglycinamidine cyclo-ligase (352 aa).

It belongs to the AIR synthase family.

Its subcellular location is the cytoplasm. The catalysed reaction is 2-formamido-N(1)-(5-O-phospho-beta-D-ribosyl)acetamidine + ATP = 5-amino-1-(5-phospho-beta-D-ribosyl)imidazole + ADP + phosphate + H(+). It functions in the pathway purine metabolism; IMP biosynthesis via de novo pathway; 5-amino-1-(5-phospho-D-ribosyl)imidazole from N(2)-formyl-N(1)-(5-phospho-D-ribosyl)glycinamide: step 2/2. This is Phosphoribosylformylglycinamidine cyclo-ligase from Pseudomonas fluorescens (strain Pf0-1).